A 47-amino-acid polypeptide reads, in one-letter code: Putative glycosylation-dependent cell adhesion molecule 1 (47 aa).

Positions 1–18 (MKFFMVLLPASLASTSLA) are cleaved as a signal peptide.

This sequence belongs to the PP3/GlyCAM-1 family. Expressed in cells harvested from milk of lactating women. Not found in other tissues.

In Homo sapiens (Human), this protein is Putative glycosylation-dependent cell adhesion molecule 1 (GLYCAM1).